We begin with the raw amino-acid sequence, 397 residues long: Elongation factor Tu (397 aa).

The region spanning 10 to 207 (KPHVNVGTIG…TLDTYIPEPV (198 aa)) is the tr-type G domain. The segment at 19–26 (GHVDHGKT) is G1. 19 to 26 (GHVDHGKT) serves as a coordination point for GTP. T26 provides a ligand contact to Mg(2+). Residues 60-64 (GITIN) form a G2 region. The interval 81–84 (DCPG) is G3. GTP is bound by residues 81 to 85 (DCPGH) and 136 to 139 (NKAD). The segment at 136–139 (NKAD) is G4. The tract at residues 174–176 (SAL) is G5.

It belongs to the TRAFAC class translation factor GTPase superfamily. Classic translation factor GTPase family. EF-Tu/EF-1A subfamily. As to quaternary structure, monomer.

It localises to the cytoplasm. It carries out the reaction GTP + H2O = GDP + phosphate + H(+). Functionally, GTP hydrolase that promotes the GTP-dependent binding of aminoacyl-tRNA to the A-site of ribosomes during protein biosynthesis. The polypeptide is Elongation factor Tu (Ectopseudomonas mendocina (strain ymp) (Pseudomonas mendocina)).